A 407-amino-acid chain; its full sequence is Aurofusarin biosynthesis cluster protein S (407 aa).

The N-terminal stretch at 1 to 35 is a signal peptide; that stretch reads MSKQKPSLWRALRALSFIISIPLLIQYLVLKWYST. 5 N-linked (GlcNAc...) asparagine glycosylation sites follow: N52, N174, N196, N274, and N312. FAS1 domains are found at residues 52 to 192 and 195 to 365; these read NLTV…DTVL and PNST…DSIL.

In terms of assembly, might be part of an extracellular enzyme complex composed of GIP1, aurF, aurO and aurS.

Its subcellular location is the secreted. It localises to the extracellular space. Its pathway is pigment biosynthesis. Part of the gene cluster that mediates the biosynthesis of aurofusarin, a red mycelium pigment which is acting as a mycotoxin. The first step is performed by the polyketide synthase which condenses one acetyl-CoA and 6 malonyl-CoA units to form the first intermediate, the cyclic heptaketide and yellow pigment YWA1. The C2 hydroxyl group in the pyrone ring of YWA1 is probably formed during ring closure by an aldol-type cyclization reaction. The dehydratase aurZ then acts as the first tailoring enzyme in the aurofusarin biosynthetic pathway by converting YWA1 to nor-rubrofusarin. Nor-rubrofusarin is then methylated to rubrofusarin by the O-methyltransferase aurJ. Rubrofusarin is then transported across the plasma membrane by the rubrofusarin-specific pump aurT for further enzymatic processing by the extracellular complex composed of GIP1, aurF, aurO and aurS to yield aurofusarin. The polypeptide is Aurofusarin biosynthesis cluster protein S (Gibberella zeae (strain ATCC MYA-4620 / CBS 123657 / FGSC 9075 / NRRL 31084 / PH-1) (Wheat head blight fungus)).